The sequence spans 98 residues: Large ribosomal subunit protein uL23 (98 aa).

This sequence belongs to the universal ribosomal protein uL23 family. In terms of assembly, part of the 50S ribosomal subunit. Contacts protein L29, and trigger factor when it is bound to the ribosome.

One of the early assembly proteins it binds 23S rRNA. One of the proteins that surrounds the polypeptide exit tunnel on the outside of the ribosome. Forms the main docking site for trigger factor binding to the ribosome. The sequence is that of Large ribosomal subunit protein uL23 from Rickettsia bellii (strain OSU 85-389).